The chain runs to 152 residues: SsrA-binding protein (152 aa).

The segment at 124–152 is disordered; the sequence is KKLHDKRDTAAERDWQRDKARLMKGDRGD. Residues 128 to 152 show a composition bias toward basic and acidic residues; that stretch reads DKRDTAAERDWQRDKARLMKGDRGD.

The protein belongs to the SmpB family.

It is found in the cytoplasm. Functionally, required for rescue of stalled ribosomes mediated by trans-translation. Binds to transfer-messenger RNA (tmRNA), required for stable association of tmRNA with ribosomes. tmRNA and SmpB together mimic tRNA shape, replacing the anticodon stem-loop with SmpB. tmRNA is encoded by the ssrA gene; the 2 termini fold to resemble tRNA(Ala) and it encodes a 'tag peptide', a short internal open reading frame. During trans-translation Ala-aminoacylated tmRNA acts like a tRNA, entering the A-site of stalled ribosomes, displacing the stalled mRNA. The ribosome then switches to translate the ORF on the tmRNA; the nascent peptide is terminated with the 'tag peptide' encoded by the tmRNA and targeted for degradation. The ribosome is freed to recommence translation, which seems to be the essential function of trans-translation. The sequence is that of SsrA-binding protein from Caulobacter vibrioides (strain ATCC 19089 / CIP 103742 / CB 15) (Caulobacter crescentus).